A 230-amino-acid chain; its full sequence is 7-cyano-7-deazaguanine synthase (230 aa).

9–19 contacts ATP; it reads YSGGLDSTTCL. The Zn(2+) site is built by Cys-190, Cys-200, Cys-203, and Cys-206.

This sequence belongs to the QueC family. Zn(2+) serves as cofactor.

The catalysed reaction is 7-carboxy-7-deazaguanine + NH4(+) + ATP = 7-cyano-7-deazaguanine + ADP + phosphate + H2O + H(+). It participates in purine metabolism; 7-cyano-7-deazaguanine biosynthesis. Its function is as follows. Catalyzes the ATP-dependent conversion of 7-carboxy-7-deazaguanine (CDG) to 7-cyano-7-deazaguanine (preQ(0)). This is 7-cyano-7-deazaguanine synthase from Syntrophotalea carbinolica (strain DSM 2380 / NBRC 103641 / GraBd1) (Pelobacter carbinolicus).